Consider the following 519-residue polypeptide: 3-octaprenyl-4-hydroxybenzoate carboxy-lyase (519 aa).

Asparagine 177 provides a ligand contact to Mn(2+). Residues 180–182, 194–196, and 199–200 contribute to the prenylated FMN site; these read IYR, RWL, and RG. Glutamate 243 serves as a coordination point for Mn(2+). Aspartate 318 acts as the Proton donor in catalysis.

This sequence belongs to the UbiD family. As to quaternary structure, homohexamer. The cofactor is prenylated FMN. Mn(2+) is required as a cofactor.

The protein resides in the cell membrane. It carries out the reaction a 4-hydroxy-3-(all-trans-polyprenyl)benzoate + H(+) = a 2-(all-trans-polyprenyl)phenol + CO2. Its pathway is cofactor biosynthesis; ubiquinone biosynthesis. Catalyzes the decarboxylation of 3-octaprenyl-4-hydroxy benzoate to 2-octaprenylphenol, an intermediate step in ubiquinone biosynthesis. In Burkholderia mallei (strain ATCC 23344), this protein is 3-octaprenyl-4-hydroxybenzoate carboxy-lyase.